A 454-amino-acid polypeptide reads, in one-letter code: uncharacterized protein (454 aa).

125–132 serves as a coordination point for ATP; the sequence is GDVGCGKT.

It belongs to the AFG1 ATPase family.

This is an uncharacterized protein from Schizosaccharomyces pombe (strain 972 / ATCC 24843) (Fission yeast).